A 251-amino-acid chain; its full sequence is Insulin-induced gene 1 protein (251 aa).

The Cytoplasmic portion of the chain corresponds to 1 to 58; it reads MQTLEEHCWSCSCTRGRDKKGTRLSTWLAQRAAKAMSSLNSLLSLAYHTLASSEGRSL. The helical transmembrane segment at 59 to 81 threads the bilayer; it reads IRRSLVLFAVGVFLALVLNLLQI. The Extracellular portion of the chain corresponds to 82–100; it reads QRNVTLFPEEVIATIFSSA. The chain crosses the membrane as a helical span at residues 101 to 118; sequence WWVPPCCGTAAAVVGLLY. Residues 119 to 133 lie on the Cytoplasmic side of the membrane; sequence PCIDSHLGEPHKFKR. Residues 134–156 form a helical membrane-spanning segment; sequence EWASVMRCIAVFVGINHASAKLD. Topologically, residues 157–159 are extracellular; sequence FAN. Residues 160–178 traverse the membrane as a helical segment; it reads NVQLSLTLAALSLGLWWTF. The Cytoplasmic segment spans residues 179 to 183; sequence DRSRS. Residues 184 to 205 form a helical membrane-spanning segment; it reads GLGLGITIAFLATLITQFLVYN. Residues 206–219 are Extracellular-facing; it reads GVYQYTSPDFLYIR. Residues 220–237 traverse the membrane as a helical segment; the sequence is SWLPCIFFSGGVTVGNIG. Residues 238–251 are Cytoplasmic-facing; the sequence is RQLAMGSSEKTHSD. The short motif at 245–251 is the KxHxx element; the sequence is SEKTHSD.

It belongs to the INSIG family. In terms of assembly, interacts with scap; interaction is direct and only takes place in the presence of sterols; it prevents interaction between scap and the coat protein complex II (COPII). Associates with the SCAP-SREBP complex; association is mediated via its interaction with scap and only takes place in the presence of sterols.

Its subcellular location is the endoplasmic reticulum membrane. Oxysterol-binding protein that mediates feedback control of cholesterol synthesis by controlling both endoplasmic reticulum to Golgi transport of scap and degradation of hmgcr. Acts as a negative regulator of cholesterol biosynthesis by mediating the retention of the SCAP-SREBP complex in the endoplasmic reticulum, thereby blocking the processing of sterol regulatory element-binding proteins (SREBPs). Binds oxysterol, including 25-hydroxycholesterol, regulating interaction with scap and retention of the SCAP-SREBP complex in the endoplasmic reticulum. In presence of oxysterol, interacts with scap, retaining the SCAP-SREBP complex in the endoplasmic reticulum, thereby preventing scap from escorting SREBPs to the Golgi. Sterol deprivation reduces oxysterol-binding, disrupting the interaction between insig1 and scap, thereby promoting Golgi transport of the SCAP-SREBP complex, followed by processing and nuclear translocation of SREBPs. Also regulates cholesterol synthesis by regulating degradation of hmgcr. This is Insulin-induced gene 1 protein from Xenopus tropicalis (Western clawed frog).